A 360-amino-acid polypeptide reads, in one-letter code: Photosystem II protein D1 (360 aa).

3 helical membrane passes run 29–46 (YIGW…AATA), 118–133 (HFLL…QWEL), and 142–156 (WICV…SATA). Residue His-118 participates in chlorophyll a binding. Residue Tyr-126 coordinates pheophytin a. Residues Asp-170 and Glu-189 each contribute to the [CaMn4O5] cluster site. Residues 197–218 (FHMLGVAGVFGGSLFSAMHGSL) traverse the membrane as a helical segment. His-198 contributes to the chlorophyll a binding site. A quinone is bound by residues His-215 and 264-265 (SF). His-215 is a Fe cation binding site. Residue His-272 participates in Fe cation binding. A helical transmembrane segment spans residues 274–288 (FLAAWPVVGIWFTAL). [CaMn4O5] cluster is bound by residues His-332, Glu-333, Asp-342, and Ala-344. A propeptide spanning residues 345–360 (AGEVAPVALTAPAING) is cleaved from the precursor.

It belongs to the reaction center PufL/M/PsbA/D family. In terms of assembly, PSII is composed of 1 copy each of membrane proteins PsbA, PsbB, PsbC, PsbD, PsbE, PsbF, PsbH, PsbI, PsbJ, PsbK, PsbL, PsbM, PsbT, PsbX, PsbY, PsbZ, Psb30/Ycf12, peripheral proteins PsbO, CyanoQ (PsbQ), PsbU, PsbV and a large number of cofactors. It forms dimeric complexes. Requires The D1/D2 heterodimer binds P680, chlorophylls that are the primary electron donor of PSII, and subsequent electron acceptors. It shares a non-heme iron and each subunit binds pheophytin, quinone, additional chlorophylls, carotenoids and lipids. D1 provides most of the ligands for the Mn4-Ca-O5 cluster of the oxygen-evolving complex (OEC). There is also a Cl(-1) ion associated with D1 and D2, which is required for oxygen evolution. The PSII complex binds additional chlorophylls, carotenoids and specific lipids. as cofactor. Post-translationally, tyr-161 forms a radical intermediate that is referred to as redox-active TyrZ, YZ or Y-Z. In terms of processing, C-terminally processed by CtpA; processing is essential to allow assembly of the oxygen-evolving complex and thus photosynthetic growth.

The protein resides in the cellular thylakoid membrane. The catalysed reaction is 2 a plastoquinone + 4 hnu + 2 H2O = 2 a plastoquinol + O2. Functionally, photosystem II (PSII) is a light-driven water:plastoquinone oxidoreductase that uses light energy to abstract electrons from H(2)O, generating O(2) and a proton gradient subsequently used for ATP formation. It consists of a core antenna complex that captures photons, and an electron transfer chain that converts photonic excitation into a charge separation. The D1/D2 (PsbA/PsbD) reaction center heterodimer binds P680, the primary electron donor of PSII as well as several subsequent electron acceptors. In Microchaete diplosiphon (Fremyella diplosiphon), this protein is Photosystem II protein D1.